The chain runs to 94 residues: Small ribosomal subunit protein uS19 (94 aa).

It belongs to the universal ribosomal protein uS19 family.

Its function is as follows. Protein S19 forms a complex with S13 that binds strongly to the 16S ribosomal RNA. The protein is Small ribosomal subunit protein uS19 of Clostridium novyi (strain NT).